The sequence spans 456 residues: Probable flavin-containing monoamine oxidase A (456 aa).

Cys394 carries the S-8alpha-FAD cysteine modification.

It belongs to the flavin monoamine oxidase family. Requires FAD as cofactor.

It catalyses the reaction a secondary aliphatic amine + O2 + H2O = a primary amine + an aldehyde + H2O2. The sequence is that of Probable flavin-containing monoamine oxidase A (maoA) from Dictyostelium discoideum (Social amoeba).